Here is a 1333-residue protein sequence, read N- to C-terminus: Vascular endothelial growth factor receptor 1 (1333 aa).

An N-terminal signal peptide occupies residues 1-22 (MVSCWDTAVLPYALLGCLLLTG). Topologically, residues 23–759 (YGSGSKLKVP…QGTSDKSNLE (737 aa)) are extracellular. Ig-like C2-type domains lie at 32–124 (PELS…AESS), 152–215 (GRQL…VNGH), 231–328 (LDVQ…TSVH), 334–429 (FISV…NVKP), 430–550 (QIYE…RNIK), 557–656 (PNGF…EVLV), and 662–748 (PHLL…AYLT). 2 disulfides stabilise this stretch: Cys53/Cys108 and Cys159/Cys208. Residues Asn101, Asn165, Asn197, and Asn252 are each glycosylated (N-linked (GlcNAc...) asparagine). A disulfide bond links Cys253 and Cys312. Residues Asn324, Asn418, Asn475, Asn517, Asn598, Asn626, Asn667, and Asn714 are each glycosylated (N-linked (GlcNAc...) asparagine). Disulfide bonds link Cys455–Cys536 and Cys578–Cys637. A disulfide bridge links Cys683 with Cys732. A helical membrane pass occupies residues 760-781 (LITLTCTCVAATLFWLLLTLFI). Topologically, residues 782-1333 (RKLKRSSSEV…SVVLYSSPPA (552 aa)) are cytoplasmic. The 331-residue stretch at 828 to 1158 (LKLGKSLGRG…ELVEKLGDLL (331 aa)) folds into the Protein kinase domain. Residues 834 to 842 (LGRGAFGKV) and Lys862 each bind ATP. Tyr915 is modified (phosphotyrosine; by autocatalysis). The tract at residues 947–983 (EPGLEQGQKPRLDSVSSSSVTSSSFPEDRSVSDVEGD) is disordered. The segment covering 960 to 970 (SVSSSSVTSSS) has biased composition (low complexity). Asp1022 serves as the catalytic Proton acceptor. Phosphotyrosine; by autocatalysis is present on residues Tyr1053, Tyr1169, Tyr1213, Tyr1242, Tyr1322, and Tyr1328.

It belongs to the protein kinase superfamily. Tyr protein kinase family. CSF-1/PDGF receptor subfamily. As to quaternary structure, interacts with VEGFA, VEGFB and PGF. Monomer in the absence of bound VEGFA, VEGFB or PGF. Homodimer in the presence of bound VEGFA, VEGFB and PGF. Can also form a heterodimer with KDR. Interacts (tyrosine phosphorylated) with CBL, CRK, GRB2, NCK1, PIK3R1, PLCG, PSEN1 and PTPN11. Probably interacts with PTPRB. Interacts with RACK1. Identified in a complex with CBL and CD2AP. N-glycosylated. Post-translationally, ubiquitinated after VEGFA-mediated autophosphorylation, leading to proteolytic degradation. In terms of processing, autophosphorylated on tyrosine residues upon ligand binding. Autophosphorylation occurs in trans, i.e. one subunit of the dimeric receptor phosphorylates tyrosine residues on the other subunit. Phosphorylation at Tyr-1169 is important for interaction with PLCG. Phosphorylation at Tyr-1213 is important for interaction with PIK3R1, PTPN11, GRB2, and PLCG. Phosphorylation at Tyr-1328 is important for endocytosis and for interaction with CBL, NCK1 and CRK. Is probably dephosphorylated by PTPRB.

Its subcellular location is the cell membrane. It localises to the endosome. The catalysed reaction is L-tyrosyl-[protein] + ATP = O-phospho-L-tyrosyl-[protein] + ADP + H(+). Its activity is regulated as follows. Present in an inactive conformation in the absence of bound ligand. Binding of VEGFA, VEGFB or PGF leads to dimerization and activation by autophosphorylation on tyrosine residues. In terms of biological role, tyrosine-protein kinase that acts as a cell-surface receptor for VEGFA, VEGFB and PGF, and plays an essential role in the development of embryonic vasculature, the regulation of angiogenesis, cell survival, cell migration, macrophage function, chemotaxis, and cancer cell invasion. Acts as a positive regulator of postnatal retinal hyaloid vessel regression. May play an essential role as a negative regulator of embryonic angiogenesis by inhibiting excessive proliferation of endothelial cells. Can promote endothelial cell proliferation, survival and angiogenesis in adulthood. Its function in promoting cell proliferation seems to be cell-type specific. Promotes PGF-mediated proliferation of endothelial cells, and proliferation of some types of cancer cells, but does not promote proliferation of normal fibroblasts. Has very high affinity for VEGFA and relatively low protein kinase activity; may function as a negative regulator of VEGFA signaling by limiting the amount of free VEGFA and preventing its binding to KDR. Modulates KDR signaling by forming heterodimers with KDR. Ligand binding leads to the activation of several signaling cascades. Activation of PLCG leads to the production of the cellular signaling molecules diacylglycerol and inositol 1,4,5-trisphosphate and the activation of protein kinase C. Mediates phosphorylation of PIK3R1, the regulatory subunit of phosphatidylinositol 3-kinase, leading to the activation of phosphatidylinositol kinase and the downstream signaling pathway. Mediates activation of MAPK1/ERK2, MAPK3/ERK1 and the MAP kinase signaling pathway, as well as of the AKT1 signaling pathway. Phosphorylates SRC, YES1 and PLCG, and may also phosphorylate CBL. Promotes phosphorylation of AKT1 and PTK2/FAK1. The sequence is that of Vascular endothelial growth factor receptor 1 (Flt1) from Mus musculus (Mouse).